The sequence spans 287 residues: Phosphatidylserine decarboxylase proenzyme (287 aa).

Active-site charge relay system; for autoendoproteolytic cleavage activity residues include Asp90, His147, and Ser252. Ser252 acts as the Schiff-base intermediate with substrate; via pyruvic acid; for decarboxylase activity in catalysis. Ser252 carries the pyruvic acid (Ser); by autocatalysis modification.

It belongs to the phosphatidylserine decarboxylase family. PSD-B subfamily. Prokaryotic type I sub-subfamily. As to quaternary structure, heterodimer of a large membrane-associated beta subunit and a small pyruvoyl-containing alpha subunit. Pyruvate serves as cofactor. Post-translationally, is synthesized initially as an inactive proenzyme. Formation of the active enzyme involves a self-maturation process in which the active site pyruvoyl group is generated from an internal serine residue via an autocatalytic post-translational modification. Two non-identical subunits are generated from the proenzyme in this reaction, and the pyruvate is formed at the N-terminus of the alpha chain, which is derived from the carboxyl end of the proenzyme. The autoendoproteolytic cleavage occurs by a canonical serine protease mechanism, in which the side chain hydroxyl group of the serine supplies its oxygen atom to form the C-terminus of the beta chain, while the remainder of the serine residue undergoes an oxidative deamination to produce ammonia and the pyruvoyl prosthetic group on the alpha chain. During this reaction, the Ser that is part of the protease active site of the proenzyme becomes the pyruvoyl prosthetic group, which constitutes an essential element of the active site of the mature decarboxylase.

It localises to the cell membrane. The catalysed reaction is a 1,2-diacyl-sn-glycero-3-phospho-L-serine + H(+) = a 1,2-diacyl-sn-glycero-3-phosphoethanolamine + CO2. It participates in phospholipid metabolism; phosphatidylethanolamine biosynthesis; phosphatidylethanolamine from CDP-diacylglycerol: step 2/2. Functionally, catalyzes the formation of phosphatidylethanolamine (PtdEtn) from phosphatidylserine (PtdSer). This Pseudomonas putida (strain ATCC 47054 / DSM 6125 / CFBP 8728 / NCIMB 11950 / KT2440) protein is Phosphatidylserine decarboxylase proenzyme.